Reading from the N-terminus, the 409-residue chain is Inactive serine protease 35 (409 aa).

The N-terminal stretch at 1–17 (MLLWLIFFTPGWTLIDG) is a signal peptide. 2 N-linked (GlcNAc...) asparagine glycosylation sites follow: Asn-87 and Asn-107. Residues 120–404 (VYGTDSRFSI…ICLWIHGNDA (285 aa)) enclose the Peptidase S1 domain. A disulfide bridge links Cys-150 with Cys-166. Residues 188-203 (RNKSGGKKRRGSKRSR) are compositionally biased toward basic residues. A disordered region spans residues 188–246 (RNKSGGKKRRGSKRSRRETSGGDQREGPREHLQDRVKAGRRRKQSGGGQRVSEGRPSFR). Over residues 204-224 (RETSGGDQREGPREHLQDRVK) the composition is skewed to basic and acidic residues.

Belongs to the peptidase S1 family.

The protein resides in the secreted. In Macaca mulatta (Rhesus macaque), this protein is Inactive serine protease 35 (PRSS35).